A 734-amino-acid polypeptide reads, in one-letter code: Photosystem I P700 chlorophyll a apoprotein A2 (734 aa).

8 helical membrane passes run 46–69, 135–158, 175–199, 273–291, 330–353, 369–395, 417–439, and 517–535; these read IFAS…FHVA, LYTG…LHLQ, LNHH…HVAI, MAHH…GHMY, IHFQ…QHMY, AALY…IFFI, AIIS…LYVH, and FLVH…LILV. 2 residues coordinate [4Fe-4S] cluster: C559 and C568. The next 2 helical transmembrane spans lie at 575 to 596 and 643 to 665; these read AFYL…YWHW and LSVW…MFLI. Residues H654, M662, and Y670 each coordinate chlorophyll a. W671 serves as a coordination point for phylloquinone. A helical transmembrane segment spans residues 707 to 727; the sequence is LVGLAHFSVGYIFTYAAFLIA.

This sequence belongs to the PsaA/PsaB family. The PsaA/B heterodimer binds the P700 chlorophyll special pair and subsequent electron acceptors. PSI consists of a core antenna complex that captures photons, and an electron transfer chain that converts photonic excitation into a charge separation. The eukaryotic PSI reaction center is composed of at least 11 subunits. It depends on P700 is a chlorophyll a/chlorophyll a' dimer, A0 is one or more chlorophyll a, A1 is one or both phylloquinones and FX is a shared 4Fe-4S iron-sulfur center. as a cofactor.

The protein localises to the plastid. It is found in the chloroplast thylakoid membrane. It carries out the reaction reduced [plastocyanin] + hnu + oxidized [2Fe-2S]-[ferredoxin] = oxidized [plastocyanin] + reduced [2Fe-2S]-[ferredoxin]. PsaA and PsaB bind P700, the primary electron donor of photosystem I (PSI), as well as the electron acceptors A0, A1 and FX. PSI is a plastocyanin-ferredoxin oxidoreductase, converting photonic excitation into a charge separation, which transfers an electron from the donor P700 chlorophyll pair to the spectroscopically characterized acceptors A0, A1, FX, FA and FB in turn. Oxidized P700 is reduced on the lumenal side of the thylakoid membrane by plastocyanin. The chain is Photosystem I P700 chlorophyll a apoprotein A2 from Triticum aestivum (Wheat).